Reading from the N-terminus, the 282-residue chain is 4-diphosphocytidyl-2-C-methyl-D-erythritol kinase (282 aa).

The active site involves Lys8. 91–101 (PVAAGLAGGST) lines the ATP pocket. Residue Asp133 is part of the active site.

The protein belongs to the GHMP kinase family. IspE subfamily.

It carries out the reaction 4-CDP-2-C-methyl-D-erythritol + ATP = 4-CDP-2-C-methyl-D-erythritol 2-phosphate + ADP + H(+). Its pathway is isoprenoid biosynthesis; isopentenyl diphosphate biosynthesis via DXP pathway; isopentenyl diphosphate from 1-deoxy-D-xylulose 5-phosphate: step 3/6. In terms of biological role, catalyzes the phosphorylation of the position 2 hydroxy group of 4-diphosphocytidyl-2C-methyl-D-erythritol. The polypeptide is 4-diphosphocytidyl-2-C-methyl-D-erythritol kinase (Symbiobacterium thermophilum (strain DSM 24528 / JCM 14929 / IAM 14863 / T)).